Consider the following 140-residue polypeptide: Respiratory supercomplex factor 1, mitochondrial (140 aa).

Positions 1–79 (MNTLQKIAYR…KESAEQKQTR (79 aa)) constitute an HIG1 domain. 2 helical membrane passes run 16-32 (LVPL…VLAA) and 46-68 (YFRY…GMYY). A coiled-coil region spans residues 68 to 126 (YQKESAEQKQTREDKLREKAKLREQLWIEELERRDQLIKARKQRLEESKKELMKVAQEG).

The protein belongs to the RCF1 family. In terms of assembly, associates with the respiratory chain complex III/complex IV supercomplex.

The protein localises to the mitochondrion membrane. Cytochrome c oxidase subunit which plays a role in assembly of respiratory supercomplexes. The polypeptide is Respiratory supercomplex factor 1, mitochondrial (RCF1) (Clavispora lusitaniae (strain ATCC 42720) (Yeast)).